Consider the following 802-residue polypeptide: Leucine--tRNA ligase (802 aa).

The 'HIGH' region signature appears at 40–51 (PYPSGAGLHVGH). The short motif at 576 to 580 (KMSKS) is the 'KMSKS' region element. Residue Lys-579 coordinates ATP.

It belongs to the class-I aminoacyl-tRNA synthetase family.

The protein resides in the cytoplasm. The enzyme catalyses tRNA(Leu) + L-leucine + ATP = L-leucyl-tRNA(Leu) + AMP + diphosphate. This is Leucine--tRNA ligase from Bacillus mycoides (strain KBAB4) (Bacillus weihenstephanensis).